Consider the following 136-residue polypeptide: Transcription antitermination protein NusB (136 aa).

This sequence belongs to the NusB family.

Functionally, involved in transcription antitermination. Required for transcription of ribosomal RNA (rRNA) genes. Binds specifically to the boxA antiterminator sequence of the ribosomal RNA (rrn) operons. This chain is Transcription antitermination protein NusB, found in Pseudoalteromonas translucida (strain TAC 125).